The primary structure comprises 361 residues: Aminomethyltransferase (361 aa).

The protein belongs to the GcvT family. In terms of assembly, the glycine cleavage system is composed of four proteins: P, T, L and H.

It catalyses the reaction N(6)-[(R)-S(8)-aminomethyldihydrolipoyl]-L-lysyl-[protein] + (6S)-5,6,7,8-tetrahydrofolate = N(6)-[(R)-dihydrolipoyl]-L-lysyl-[protein] + (6R)-5,10-methylene-5,6,7,8-tetrahydrofolate + NH4(+). In terms of biological role, the glycine cleavage system catalyzes the degradation of glycine. The chain is Aminomethyltransferase from Bacteroides fragilis (strain ATCC 25285 / DSM 2151 / CCUG 4856 / JCM 11019 / LMG 10263 / NCTC 9343 / Onslow / VPI 2553 / EN-2).